A 333-amino-acid polypeptide reads, in one-letter code: Glycerol-3-phosphate dehydrogenase [NAD(P)+] (333 aa).

NADPH is bound by residues Trp-16, Arg-36, and Lys-109. Lys-109, Gly-137, and Ser-139 together coordinate sn-glycerol 3-phosphate. Residue Ala-141 coordinates NADPH. Sn-glycerol 3-phosphate contacts are provided by Lys-192, Asp-245, Ser-255, Arg-256, and Asn-257. Residue Lys-192 is the Proton acceptor of the active site. Arg-256 provides a ligand contact to NADPH. Positions 280 and 282 each coordinate NADPH.

The protein belongs to the NAD-dependent glycerol-3-phosphate dehydrogenase family.

Its subcellular location is the cytoplasm. It catalyses the reaction sn-glycerol 3-phosphate + NAD(+) = dihydroxyacetone phosphate + NADH + H(+). It carries out the reaction sn-glycerol 3-phosphate + NADP(+) = dihydroxyacetone phosphate + NADPH + H(+). The protein operates within membrane lipid metabolism; glycerophospholipid metabolism. Its function is as follows. Catalyzes the reduction of the glycolytic intermediate dihydroxyacetone phosphate (DHAP) to sn-glycerol 3-phosphate (G3P), the key precursor for phospholipid synthesis. This is Glycerol-3-phosphate dehydrogenase [NAD(P)+] from Parvibaculum lavamentivorans (strain DS-1 / DSM 13023 / NCIMB 13966).